The chain runs to 284 residues: Tetraspanin-10 (284 aa).

At 1 to 11 (MGMGTSTFVIR) the chain is on the cytoplasmic side. The helical transmembrane segment at 12–32 (WVNLLTMLLAVAVIIFGVWMS) threads the bilayer. Residues 33–43 (THNDGCRRSLT) lie on the Extracellular side of the membrane. The helical transmembrane segment at 44–64 (FPVIALGGFIFLISIIGFLGA) threads the bilayer. Residues 65–75 (CKRSVALLWIY) are Cytoplasmic-facing. A helical membrane pass occupies residues 76-96 (LAVLLIVLIAILVFTVLAFIV). Over 97-228 (TNNGSGHTNP…AGVAQYMKTE (132 aa)) the chain is Extracellular. N-linked (GlcNAc...) asparagine glycans are attached at residues asparagine 99, asparagine 128, and asparagine 183. A helical transmembrane segment spans residues 229–249 (WRLVAIFNVVLFVVLISSLLS). Over 250 to 284 (TRFDSEQSFGLLNGLVQISNITFKDCQTTTVPKQF) the chain is Cytoplasmic.

It belongs to the tetraspanin (TM4SF) family.

It is found in the membrane. May be involved in the regulation of cell differentiation. The protein is Tetraspanin-10 (TET10) of Arabidopsis thaliana (Mouse-ear cress).